The primary structure comprises 310 residues: Beta-ketoacyl-[acyl-carrier-protein] synthase III 1 (310 aa).

Residues Cys-112 and His-235 contribute to the active site. The segment at Gln-236 to Arg-240 is ACP-binding. Asn-265 is an active-site residue.

Belongs to the thiolase-like superfamily. FabH family. As to quaternary structure, homodimer.

The protein resides in the cytoplasm. It catalyses the reaction malonyl-[ACP] + acetyl-CoA + H(+) = 3-oxobutanoyl-[ACP] + CO2 + CoA. It functions in the pathway lipid metabolism; fatty acid biosynthesis. Catalyzes the condensation reaction of fatty acid synthesis by the addition to an acyl acceptor of two carbons from malonyl-ACP. Catalyzes the first condensation reaction which initiates fatty acid synthesis and may therefore play a role in governing the total rate of fatty acid production. Possesses both acetoacetyl-ACP synthase and acetyl transacylase activities. Its substrate specificity determines the biosynthesis of branched-chain and/or straight-chain of fatty acids. The chain is Beta-ketoacyl-[acyl-carrier-protein] synthase III 1 from Bacillus anthracis.